Reading from the N-terminus, the 362-residue chain is Protein RecA (362 aa).

77–84 (GPESSGKT) serves as a coordination point for ATP.

The protein belongs to the RecA family.

Its subcellular location is the cytoplasm. Can catalyze the hydrolysis of ATP in the presence of single-stranded DNA, the ATP-dependent uptake of single-stranded DNA by duplex DNA, and the ATP-dependent hybridization of homologous single-stranded DNAs. It interacts with LexA causing its activation and leading to its autocatalytic cleavage. The polypeptide is Protein RecA (Rhizobium leguminosarum bv. trifolii (strain WSM2304)).